The chain runs to 262 residues: Putative hydro-lyase BLi00500/BL02808 (262 aa).

This sequence belongs to the D-glutamate cyclase family.

This is Putative hydro-lyase BLi00500/BL02808 from Bacillus licheniformis (strain ATCC 14580 / DSM 13 / JCM 2505 / CCUG 7422 / NBRC 12200 / NCIMB 9375 / NCTC 10341 / NRRL NRS-1264 / Gibson 46).